The primary structure comprises 73 residues: Putative membrane protein insertion efficiency factor (73 aa).

The protein belongs to the UPF0161 family.

It localises to the cell inner membrane. Functionally, could be involved in insertion of integral membrane proteins into the membrane. The protein is Putative membrane protein insertion efficiency factor of Neisseria meningitidis serogroup C (strain 053442).